Consider the following 508-residue polypeptide: Aspartic proteinase A3 (508 aa).

An N-terminal signal peptide occupies residues 1–25 (MGTRFQSFLLVFLLSCLILISTASC). Positions 26–69 (ERNGDGTIRIGLKKRKLDRSNRLASQLFLKNRGSHWSPKHYFRL) are cleaved as a propeptide — activation peptide. In terms of domain architecture, Peptidase A1 spans 87–505 (YYGDITIGTP…DYGKGRVGFA (419 aa)). Aspartate 105 is a catalytic residue. Cystine bridges form between cysteine 118–cysteine 124 and cysteine 283–cysteine 287. Aspartate 292 is an active-site residue. One can recognise a Saposin B-type domain in the interval 317–419 (IVSRECKAVV…AELCDHIPTQ (103 aa)). Intrachain disulfides connect cysteine 322/cysteine 413, cysteine 347/cysteine 385, cysteine 353/cysteine 382, and cysteine 427/cysteine 464. Residue asparagine 399 is glycosylated (N-linked (GlcNAc...) asparagine).

The protein belongs to the peptidase A1 family. In terms of tissue distribution, expressed in petals, carpels and seed pods.

The protein resides in the secreted. Involved in the processing and degradation of storage proteins. The protein is Aspartic proteinase A3 (APA3) of Arabidopsis thaliana (Mouse-ear cress).